A 724-amino-acid chain; its full sequence is uncharacterized protein (724 aa).

Disordered stretches follow at residues 97–131 (RKSF…YPSP), 187–252 (ETKI…FETE), 309–434 (FETE…TSKL), and 454–473 (RGVE…VAEK). Over residues 115–128 (TRSASYSESNNSFY) the composition is skewed to polar residues. The stretch at 187-217 (ETKIGIEEENEESEILAEEKEEEDNDFSVLE) forms a coiled coil. Acidic residues predominate over residues 193-212 (EEENEESEILAEEKEEEDND). Basic and acidic residues-rich tracts occupy residues 223-252 (QEIK…FETE) and 309-322 (FETE…DHSE). Low complexity-rich tracts occupy residues 323 to 333 (TTTSETDSTES) and 347 to 366 (SPQT…SLRS). Pro residues predominate over residues 367–388 (QPPPPPPSPEHKAPAPPPPPPM). Over residues 400–410 (FSKTHSTNGDN) the composition is skewed to polar residues. Coiled-coil stretches lie at residues 495-522 (SYFQ…HSFQ) and 649-678 (MELA…RAKR).

This is an uncharacterized protein from Arabidopsis thaliana (Mouse-ear cress).